Here is a 134-residue protein sequence, read N- to C-terminus: Acyl carrier protein, chloroplastic (134 aa).

The N-terminal 51 residues, 1–51 (MSTTFCSSVSMQATSLAATTRISFQKPALVSRTNLSFNLSRSIPTRLSVSC), are a transit peptide targeting the chloroplast. The Carrier domain occupies 55–130 (PETVEKVSKI…EAAELIDELV (76 aa)). Position 90 is an O-(pantetheine 4'-phosphoryl)serine (Ser-90).

It belongs to the acyl carrier protein (ACP) family. In terms of processing, 4'-phosphopantetheine is transferred from CoA to a specific serine of apo-ACP by acpS. This modification is essential for activity because fatty acids are bound in thioester linkage to the sulfhydryl of the prosthetic group. Seed.

It is found in the plastid. Its subcellular location is the chloroplast. It functions in the pathway lipid metabolism; fatty acid biosynthesis. Functionally, carrier of the growing fatty acid chain in fatty acid biosynthesis. The chain is Acyl carrier protein, chloroplastic (ACL1.A1) from Brassica napus (Rape).